A 652-amino-acid polypeptide reads, in one-letter code: MSNSSIEKIDNKYNFKIEYKLINNKELLKSRLSEIPKSSGCYLFKDIDNNLLYIGKSKKLRSRVSSYFNNYSDLTPRLSLMVRQITEIEIIVTDSEYEALNLESNLIKTNKPYFNILLKDDKKYPYLCITWSEKYPRIFITRRRRNRNNLDRYYGPYVDVGLLRRTLFTIKKIFPLRQRPRPVYKDRTCLNYSIGRCPGVCQEVISSDDYKKIMQQVSMIFQGRNDDLEIFLQKKMLQFSNDLDYENAAKIRDQISGLKLLTESQKISIPDSSINRDIFGIVSEKNVASIQIFQMRSGKLIGRIGYSQKLNNEDENHILQKILEEHYMNVEAVEIPSEILIQYNLPKQATIEDWLTELRKKKVKILIPKRNKKHETVEMVLKNAKLELDRILNGIQDNESSIEDLAQILELSEQPKRIEGYDISHIQGSDPVASQVVFIDGIPSKQHYRKYKIKDPNVFVGHSDDFASIYEVIHRRFKKWSRFKKSGGDFSILNDKTNSKLDNELLSDWPDLIMIDGGKGQLNAAIKALNELNLEEEVTICSLAKKNEEIFIPGFTKSLDTDENQKGVLLLRRVRDEAHRFALSFHRDKRSKRMNRSQLSQISGLGPSRIRELLEYFKSIDAIRIASKEDLSKVKGLGKNSVNDIYEYFNEL.

Residues 37–116 (KSSGCYLFKD…IKTNKPYFNI (80 aa)) enclose the GIY-YIG domain. Residues 226 to 261 (DDLEIFLQKKMLQFSNDLDYENAAKIRDQISGLKLL) form the UVR domain.

The protein belongs to the UvrC family. Interacts with UvrB in an incision complex.

It is found in the cytoplasm. In terms of biological role, the UvrABC repair system catalyzes the recognition and processing of DNA lesions. UvrC both incises the 5' and 3' sides of the lesion. The N-terminal half is responsible for the 3' incision and the C-terminal half is responsible for the 5' incision. This Prochlorococcus marinus (strain MIT 9312) protein is UvrABC system protein C.